The primary structure comprises 173 residues: Crossover junction endodeoxyribonuclease RuvC (173 aa).

Active-site residues include D8, E67, and D139. Mg(2+) contacts are provided by D8, E67, and D139.

It belongs to the RuvC family. In terms of assembly, homodimer which binds Holliday junction (HJ) DNA. The HJ becomes 2-fold symmetrical on binding to RuvC with unstacked arms; it has a different conformation from HJ DNA in complex with RuvA. In the full resolvosome a probable DNA-RuvA(4)-RuvB(12)-RuvC(2) complex forms which resolves the HJ. Requires Mg(2+) as cofactor.

Its subcellular location is the cytoplasm. The catalysed reaction is Endonucleolytic cleavage at a junction such as a reciprocal single-stranded crossover between two homologous DNA duplexes (Holliday junction).. Its function is as follows. The RuvA-RuvB-RuvC complex processes Holliday junction (HJ) DNA during genetic recombination and DNA repair. Endonuclease that resolves HJ intermediates. Cleaves cruciform DNA by making single-stranded nicks across the HJ at symmetrical positions within the homologous arms, yielding a 5'-phosphate and a 3'-hydroxyl group; requires a central core of homology in the junction. The consensus cleavage sequence is 5'-(A/T)TT(C/G)-3'. Cleavage occurs on the 3'-side of the TT dinucleotide at the point of strand exchange. HJ branch migration catalyzed by RuvA-RuvB allows RuvC to scan DNA until it finds its consensus sequence, where it cleaves and resolves the cruciform DNA. In terms of biological role, plays a role in recovery after DNA ADP-ribosylation, probably via replication fork reversal. The sequence is that of Crossover junction endodeoxyribonuclease RuvC from Escherichia coli O127:H6 (strain E2348/69 / EPEC).